The sequence spans 248 residues: Probable transcriptional regulatory protein Psyr_1407 (248 aa).

The protein belongs to the TACO1 family.

The protein localises to the cytoplasm. The sequence is that of Probable transcriptional regulatory protein Psyr_1407 from Pseudomonas syringae pv. syringae (strain B728a).